Consider the following 208-residue polypeptide: Small ribosomal subunit protein uS4 (208 aa).

Residues 98–161 (RRLDNVIYRL…RKIPVIAEAQ (64 aa)) enclose the S4 RNA-binding domain.

The protein belongs to the universal ribosomal protein uS4 family. In terms of assembly, part of the 30S ribosomal subunit. Contacts protein S5. The interaction surface between S4 and S5 is involved in control of translational fidelity.

One of the primary rRNA binding proteins, it binds directly to 16S rRNA where it nucleates assembly of the body of the 30S subunit. Its function is as follows. With S5 and S12 plays an important role in translational accuracy. The polypeptide is Small ribosomal subunit protein uS4 (Nitratidesulfovibrio vulgaris (strain DSM 19637 / Miyazaki F) (Desulfovibrio vulgaris)).